The primary structure comprises 361 residues: UDP-N-acetylglucosamine--N-acetylmuramyl-(pentapeptide) pyrophosphoryl-undecaprenol N-acetylglucosamine transferase (361 aa).

Residues 11–13 (TGG), Asn124, Arg164, Ser192, and Gln295 contribute to the UDP-N-acetyl-alpha-D-glucosamine site.

Belongs to the glycosyltransferase 28 family. MurG subfamily.

It is found in the cell membrane. It catalyses the reaction di-trans,octa-cis-undecaprenyl diphospho-N-acetyl-alpha-D-muramoyl-L-alanyl-D-glutamyl-meso-2,6-diaminopimeloyl-D-alanyl-D-alanine + UDP-N-acetyl-alpha-D-glucosamine = di-trans,octa-cis-undecaprenyl diphospho-[N-acetyl-alpha-D-glucosaminyl-(1-&gt;4)]-N-acetyl-alpha-D-muramoyl-L-alanyl-D-glutamyl-meso-2,6-diaminopimeloyl-D-alanyl-D-alanine + UDP + H(+). Its pathway is cell wall biogenesis; peptidoglycan biosynthesis. In terms of biological role, cell wall formation. Catalyzes the transfer of a GlcNAc subunit on undecaprenyl-pyrophosphoryl-MurNAc-pentapeptide (lipid intermediate I) to form undecaprenyl-pyrophosphoryl-MurNAc-(pentapeptide)GlcNAc (lipid intermediate II). The protein is UDP-N-acetylglucosamine--N-acetylmuramyl-(pentapeptide) pyrophosphoryl-undecaprenol N-acetylglucosamine transferase of Deinococcus geothermalis (strain DSM 11300 / CIP 105573 / AG-3a).